The chain runs to 277 residues: NH(3)-dependent NAD(+) synthetase (277 aa).

47–54 (GISGGQDS) serves as a coordination point for ATP. Asp53 contacts Mg(2+). Deamido-NAD(+) is bound at residue Arg141. An ATP-binding site is contributed by Thr161. Glu166 contacts Mg(2+). The deamido-NAD(+) site is built by Lys174 and Asp181. ATP is bound by residues Lys190 and Thr212. Residue 261 to 262 (HK) participates in deamido-NAD(+) binding.

The protein belongs to the NAD synthetase family. As to quaternary structure, homodimer.

It carries out the reaction deamido-NAD(+) + NH4(+) + ATP = AMP + diphosphate + NAD(+) + H(+). The protein operates within cofactor biosynthesis; NAD(+) biosynthesis; NAD(+) from deamido-NAD(+) (ammonia route): step 1/1. Its function is as follows. Catalyzes the ATP-dependent amidation of deamido-NAD to form NAD. Uses ammonia as a nitrogen source. The chain is NH(3)-dependent NAD(+) synthetase from Lactobacillus johnsonii (strain CNCM I-12250 / La1 / NCC 533).